Consider the following 185-residue polypeptide: uncharacterized protein (185 aa).

The Nudix hydrolase domain occupies 39–177; sequence LWHASAGVLV…SWPFVPDSRA (139 aa). Residues 77–99 carry the Nudix box motif; it reads GGVVDPGETPQETAIREVGEELG. Positions 93 and 97 each coordinate Mg(2+).

It belongs to the Nudix hydrolase family. It depends on Mg(2+) as a cofactor.

This is an uncharacterized protein from Rhodococcus erythropolis (Arthrobacter picolinophilus).